Consider the following 156-residue polypeptide: Ribosomal RNA large subunit methyltransferase H (156 aa).

Residues L73, G104, and 123–128 contribute to the S-adenosyl-L-methionine site; that span reads LSALTL.

It belongs to the RNA methyltransferase RlmH family. As to quaternary structure, homodimer.

It is found in the cytoplasm. The enzyme catalyses pseudouridine(1915) in 23S rRNA + S-adenosyl-L-methionine = N(3)-methylpseudouridine(1915) in 23S rRNA + S-adenosyl-L-homocysteine + H(+). Functionally, specifically methylates the pseudouridine at position 1915 (m3Psi1915) in 23S rRNA. The sequence is that of Ribosomal RNA large subunit methyltransferase H from Shewanella sp. (strain ANA-3).